Here is a 107-residue protein sequence, read N- to C-terminus: UPF0060 membrane protein PSHAa1175 (107 aa).

4 helical membrane passes run 3 to 23 (IFGLFLITALAEIIGCYLPYL), 30 to 50 (SVWLLVPAALSLAIFAWLLSL), 60 to 80 (AAYGGVYIFMAILWLWAVDGI), and 84 to 104 (TWDLVGSGVALVGMAIIMFAP).

Belongs to the UPF0060 family.

The protein resides in the cell inner membrane. The chain is UPF0060 membrane protein PSHAa1175 from Pseudoalteromonas translucida (strain TAC 125).